A 286-amino-acid chain; its full sequence is Shikimate dehydrogenase (NADP(+)) (286 aa).

Shikimate contacts are provided by residues 19-21 and Thr-66; that span reads SFS. Lys-70 serves as the catalytic Proton acceptor. 2 residues coordinate shikimate: Asn-91 and Asp-107. Residues 129–133 and Leu-229 each bind NADP(+); that span reads GSGGA. Shikimate is bound at residue Tyr-231. Gly-252 is an NADP(+) binding site.

The protein belongs to the shikimate dehydrogenase family. In terms of assembly, homodimer.

It catalyses the reaction shikimate + NADP(+) = 3-dehydroshikimate + NADPH + H(+). The protein operates within metabolic intermediate biosynthesis; chorismate biosynthesis; chorismate from D-erythrose 4-phosphate and phosphoenolpyruvate: step 4/7. Its function is as follows. Involved in the biosynthesis of the chorismate, which leads to the biosynthesis of aromatic amino acids. Catalyzes the reversible NADPH linked reduction of 3-dehydroshikimate (DHSA) to yield shikimate (SA). In Prochlorococcus marinus (strain MIT 9301), this protein is Shikimate dehydrogenase (NADP(+)).